We begin with the raw amino-acid sequence, 78 residues long: Acyl carrier protein (78 aa).

The Carrier domain maps to 2–77; the sequence is STIEERVKKI…AAIDYVNSHQ (76 aa). O-(pantetheine 4'-phosphoryl)serine is present on serine 37.

Belongs to the acyl carrier protein (ACP) family. Post-translationally, 4'-phosphopantetheine is transferred from CoA to a specific serine of apo-ACP by AcpS. This modification is essential for activity because fatty acids are bound in thioester linkage to the sulfhydryl of the prosthetic group.

The protein resides in the cytoplasm. The protein operates within lipid metabolism; fatty acid biosynthesis. Its function is as follows. Carrier of the growing fatty acid chain in fatty acid biosynthesis. This Pseudomonas putida (strain W619) protein is Acyl carrier protein.